The following is a 141-amino-acid chain: Large ribosomal subunit protein uL11 (141 aa).

It belongs to the universal ribosomal protein uL11 family. In terms of assembly, part of the ribosomal stalk of the 50S ribosomal subunit. Interacts with L10 and the large rRNA to form the base of the stalk. L10 forms an elongated spine to which L12 dimers bind in a sequential fashion forming a multimeric L10(L12)X complex. In terms of processing, one or more lysine residues are methylated.

Its function is as follows. Forms part of the ribosomal stalk which helps the ribosome interact with GTP-bound translation factors. This is Large ribosomal subunit protein uL11 from Roseiflexus castenholzii (strain DSM 13941 / HLO8).